The sequence spans 236 residues: Urease accessory protein UreF (236 aa).

This sequence belongs to the UreF family. UreD, UreF and UreG form a complex that acts as a GTP-hydrolysis-dependent molecular chaperone, activating the urease apoprotein by helping to assemble the nickel containing metallocenter of UreC. The UreE protein probably delivers the nickel.

It localises to the cytoplasm. Functionally, required for maturation of urease via the functional incorporation of the urease nickel metallocenter. The sequence is that of Urease accessory protein UreF from Granulibacter bethesdensis (strain ATCC BAA-1260 / CGDNIH1).